The following is a 527-amino-acid chain: EGF domain-specific O-linked N-acetylglucosamine transferase (527 aa).

The N-terminal stretch at Met-1–Ser-17 is a signal peptide. The Required for optimal activity motif lies at Asp-295–Asp-297. Asn-354 carries an N-linked (GlcNAc...) asparagine glycan. The Prevents secretion from ER signature appears at Arg-524–Leu-527.

The protein belongs to the glycosyltransferase 61 family.

It is found in the endoplasmic reticulum lumen. The catalysed reaction is L-seryl-[protein] + UDP-N-acetyl-alpha-D-glucosamine = 3-O-(N-acetyl-beta-D-glucosaminyl)-L-seryl-[protein] + UDP + H(+). It carries out the reaction L-threonyl-[protein] + UDP-N-acetyl-alpha-D-glucosamine = 3-O-(N-acetyl-beta-D-glucosaminyl)-L-threonyl-[protein] + UDP + H(+). Catalyzes the transfer of a single N-acetylglucosamine from UDP-GlcNAc to a serine or threonine residue in extracellular proteins resulting in their modification with a beta-linked N-acetylglucosamine (O-GlcNAc). Specifically glycosylates the Thr residue located between the fifth and sixth conserved cysteines of folded EGF-like domains. The sequence is that of EGF domain-specific O-linked N-acetylglucosamine transferase (EOGT) from Canis lupus familiaris (Dog).